The sequence spans 165 residues: PARP-type zinc finger-containing protein C13F5.07c (165 aa).

Residues 8–100 form a PARP-type; degenerate zinc finger; that stretch reads YRIEIAPNNR…KVVDAINEGH (93 aa). Basic and acidic residues predominate over residues 100 to 114; sequence HVSESDERESRKLGE. Residues 100–165 are disordered; sequence HVSESDERES…TDGSEAYEDD (66 aa). Over residues 117-128 the composition is skewed to polar residues; it reads NVNSQKLKTSSP. The segment covering 131 to 141 has biased composition (basic residues); the sequence is VVRKNKRHHTT. Residues 149 to 165 show a composition bias toward acidic residues; the sequence is SDLDAEFTDGSEAYEDD.

It localises to the cytoplasm. Its subcellular location is the nucleus. This Schizosaccharomyces pombe (strain 972 / ATCC 24843) (Fission yeast) protein is PARP-type zinc finger-containing protein C13F5.07c.